A 113-amino-acid chain; its full sequence is Integration host factor subunit alpha (113 aa).

The interval 87 to 113 (NALNGEVSDETTEGADDDDDEEGEGDE) is disordered. Residues 93–113 (VSDETTEGADDDDDEEGEGDE) show a composition bias toward acidic residues.

Belongs to the bacterial histone-like protein family. As to quaternary structure, heterodimer of an alpha and a beta chain.

This protein is one of the two subunits of integration host factor, a specific DNA-binding protein that functions in genetic recombination as well as in transcriptional and translational control. This Anaeromyxobacter dehalogenans (strain 2CP-1 / ATCC BAA-258) protein is Integration host factor subunit alpha.